Consider the following 248-residue polypeptide: 14-3-3 protein gamma-2 (248 aa).

This sequence belongs to the 14-3-3 family. As to quaternary structure, homodimer, and heterodimer with other family members. As to expression, expressed in brain, gill, heart, intestine, kidney, liver, ovary, skeletal muscle, spleen and testis.

It localises to the cytoplasm. In terms of biological role, adapter protein implicated in the regulation of a large spectrum of both general and specialized signaling pathways. Binds to a large number of partners, usually by recognition of a phosphoserine or phosphothreonine motif. Binding generally results in the modulation of the activity of the binding partner. The chain is 14-3-3 protein gamma-2 from Oncorhynchus mykiss (Rainbow trout).